Here is an 80-residue protein sequence, read N- to C-terminus: Exodeoxyribonuclease 7 small subunit (80 aa).

This sequence belongs to the XseB family. As to quaternary structure, heterooligomer composed of large and small subunits.

It localises to the cytoplasm. The enzyme catalyses Exonucleolytic cleavage in either 5'- to 3'- or 3'- to 5'-direction to yield nucleoside 5'-phosphates.. Functionally, bidirectionally degrades single-stranded DNA into large acid-insoluble oligonucleotides, which are then degraded further into small acid-soluble oligonucleotides. In Escherichia coli O6:K15:H31 (strain 536 / UPEC), this protein is Exodeoxyribonuclease 7 small subunit.